The following is a 144-amino-acid chain: MNLSNLRAPRKANEKKKRVGRGMGSGMGKTSARGHKGQRSRSGSRMMRGFEGGQMPLHRRLPKRGFTNIFRVEYAVVNLDRLAELGLTEITPEVLIKHKLAGKNDKIKVLGNGEIKGAVTVRAHKFSKTAEEKIAKAGGKAEVL.

The disordered stretch occupies residues 1 to 58 (MNLSNLRAPRKANEKKKRVGRGMGSGMGKTSARGHKGQRSRSGSRMMRGFEGGQMPLH). Basic residues predominate over residues 8-20 (APRKANEKKKRVG). The span at 40–49 (SRSGSRMMRG) shows a compositional bias: low complexity.

This sequence belongs to the universal ribosomal protein uL15 family. Part of the 50S ribosomal subunit.

Functionally, binds to the 23S rRNA. The protein is Large ribosomal subunit protein uL15 of Koribacter versatilis (strain Ellin345).